The primary structure comprises 359 residues: DNA replication and repair protein RecF (359 aa).

30 to 37 (GPNGSGKT) serves as a coordination point for ATP.

Belongs to the RecF family.

The protein resides in the cytoplasm. The RecF protein is involved in DNA metabolism; it is required for DNA replication and normal SOS inducibility. RecF binds preferentially to single-stranded, linear DNA. It also seems to bind ATP. In Aliivibrio fischeri (strain MJ11) (Vibrio fischeri), this protein is DNA replication and repair protein RecF.